The following is a 300-amino-acid chain: Apolipoprotein E (300 aa).

The first 18 residues, 1–18 (MKVLWAVLVVTLLAGCQA), serve as a signal peptide directing secretion. The interval 74-246 (VLMEDTMKEV…RLDEVREQME (173 aa)) is 8 X 22 AA approximate tandem repeats. Tandem repeats lie at residues 75 to 95 (LMED…QELA), 96 to 117 (PMAE…ARLG), 118 to 139 (ADME…SMLG), 140 to 161 (HSAE…KRLL), 162 to 183 (RDAE…EGAE), 184 to 205 (RSVS…LRTA), 206 to 224 (ALTS…ERLR), and 225 to 243 (GRLE…EVRE). A Methionine sulfoxide modification is found at methionine 137. A Phosphoserine modification is found at serine 141. Residues 152-162 (HLRKLRKRLLR) form an LDL and other lipoprotein receptors binding region. Heparin is bound at residue 156 to 159 (LRKR). Residues 204 to 274 (TAALTSQPLQ…GWFEPMMEDI (71 aa)) form a lipid-binding and lipoprotein association region. Heparin is bound at residue 220-227 (GERLRGRL). Positions 262 to 274 (RLKGWFEPMMEDI) are specificity for association with VLDL.

This sequence belongs to the apolipoprotein A1/A4/E family. Homotetramer. May interact with ABCA1; functionally associated with ABCA1 in the biogenesis of HDLs. May interact with APP/A4 amyloid-beta peptide; the interaction is extremely stable in vitro but its physiological significance is unclear. May interact with MAPT. May interact with MAP2. In the cerebrospinal fluid, interacts with secreted SORL1. Interacts with PMEL; this allows the loading of PMEL luminal fragment on ILVs to induce fibril nucleation. In terms of processing, APOE exists as multiple glycosylated and sialylated glycoforms within cells and in plasma. The extent of glycosylation and sialylation are tissue and context specific. Post-translationally, glycated in plasma VLDL. Phosphorylated by FAM20C in the extracellular medium.

Its subcellular location is the secreted. The protein localises to the extracellular space. It is found in the extracellular matrix. The protein resides in the extracellular vesicle. It localises to the endosome. Its subcellular location is the multivesicular body. Its function is as follows. APOE is an apolipoprotein, a protein associating with lipid particles, that mainly functions in lipoprotein-mediated lipid transport between organs via the plasma and interstitial fluids. APOE is a core component of plasma lipoproteins and is involved in their production, conversion and clearance. Apolipoproteins are amphipathic molecules that interact both with lipids of the lipoprotein particle core and the aqueous environment of the plasma. As such, APOE associates with chylomicrons, chylomicron remnants, very low density lipoproteins (VLDL) and intermediate density lipoproteins (IDL) but shows a preferential binding to high-density lipoproteins (HDL). It also binds a wide range of cellular receptors including the LDL receptor/LDLR, the LDL receptor-related proteins LRP1, LRP2 and LRP8 and the very low-density lipoprotein receptor/VLDLR that mediate the cellular uptake of the APOE-containing lipoprotein particles. Finally, APOE also has a heparin-binding activity and binds heparan-sulfate proteoglycans on the surface of cells, a property that supports the capture and the receptor-mediated uptake of APOE-containing lipoproteins by cells. A main function of APOE is to mediate lipoprotein clearance through the uptake of chylomicrons, VLDLs, and HDLs by hepatocytes. APOE is also involved in the biosynthesis by the liver of VLDLs as well as their uptake by peripheral tissues ensuring the delivery of triglycerides and energy storage in muscle, heart and adipose tissues. By participating in the lipoprotein-mediated distribution of lipids among tissues, APOE plays a critical role in plasma and tissues lipid homeostasis. APOE is also involved in two steps of reverse cholesterol transport, the HDLs-mediated transport of cholesterol from peripheral tissues to the liver, and thereby plays an important role in cholesterol homeostasis. First, it is functionally associated with ABCA1 in the biogenesis of HDLs in tissues. Second, it is enriched in circulating HDLs and mediates their uptake by hepatocytes. APOE also plays an important role in lipid transport in the central nervous system, regulating neuron survival and sprouting. The polypeptide is Apolipoprotein E (APOE) (Dinomys branickii (Pacarana)).